A 476-amino-acid polypeptide reads, in one-letter code: Proline--tRNA ligase (476 aa).

This sequence belongs to the class-II aminoacyl-tRNA synthetase family. ProS type 3 subfamily. Homodimer.

Its subcellular location is the cytoplasm. It catalyses the reaction tRNA(Pro) + L-proline + ATP = L-prolyl-tRNA(Pro) + AMP + diphosphate. Its function is as follows. Catalyzes the attachment of proline to tRNA(Pro) in a two-step reaction: proline is first activated by ATP to form Pro-AMP and then transferred to the acceptor end of tRNA(Pro). The protein is Proline--tRNA ligase of Rubrobacter xylanophilus (strain DSM 9941 / JCM 11954 / NBRC 16129 / PRD-1).